Reading from the N-terminus, the 292-residue chain is Outer membrane protein assembly factor BamD (292 aa).

The first 26 residues, 1-26 (MIQRPTFFTPTHLLAMLLATFVLITG), serve as a signal peptide directing secretion. The N-palmitoyl cysteine moiety is linked to residue Cys-27. Cys-27 carries the S-diacylglycerol cysteine lipid modification.

Belongs to the BamD family. As to quaternary structure, part of the Bam complex.

The protein localises to the cell outer membrane. In terms of biological role, part of the outer membrane protein assembly complex, which is involved in assembly and insertion of beta-barrel proteins into the outer membrane. In Xylella fastidiosa (strain 9a5c), this protein is Outer membrane protein assembly factor BamD.